Consider the following 247-residue polypeptide: ATP synthase subunit a, chloroplastic (247 aa).

Transmembrane regions (helical) follow at residues 36–56 (GQVL…SIAG), 95–115 (IPFL…GALI), 134–154 (INTT…AGFS), 199–219 (LVVG…IMLL), and 220–240 (GLFT…AYIG).

This sequence belongs to the ATPase A chain family. F-type ATPases have 2 components, CF(1) - the catalytic core - and CF(0) - the membrane proton channel. CF(1) has five subunits: alpha(3), beta(3), gamma(1), delta(1), epsilon(1). CF(0) has four main subunits: a, b, b' and c.

The protein localises to the plastid. It is found in the chloroplast thylakoid membrane. In terms of biological role, key component of the proton channel; it plays a direct role in the translocation of protons across the membrane. In Tupiella akineta (Green alga), this protein is ATP synthase subunit a, chloroplastic.